A 171-amino-acid chain; its full sequence is Peptide deformylase (171 aa).

Residues cysteine 87 and histidine 129 each coordinate Fe cation. The active site involves glutamate 130. Histidine 133 contacts Fe cation.

The protein belongs to the polypeptide deformylase family. Fe(2+) serves as cofactor.

It catalyses the reaction N-terminal N-formyl-L-methionyl-[peptide] + H2O = N-terminal L-methionyl-[peptide] + formate. Its function is as follows. Removes the formyl group from the N-terminal Met of newly synthesized proteins. Requires at least a dipeptide for an efficient rate of reaction. N-terminal L-methionine is a prerequisite for activity but the enzyme has broad specificity at other positions. The polypeptide is Peptide deformylase (Pseudothermotoga lettingae (strain ATCC BAA-301 / DSM 14385 / NBRC 107922 / TMO) (Thermotoga lettingae)).